Consider the following 257-residue polypeptide: MSSAPNGRKKRPSRSTRSSIFQISKPPLQTGDWERRGSGSESAHKSQRALDDCKMLVQEFNTQVALYRELVISIGDVSVSCPSLREEMHKTRTKGCEMARQAHQKLAAISGPEDGEIHPEICRLYIQLQCCLEMYTTEMLKSICLLGSLQFHRKGKEPGGGSKSLDCKIEECAETPALEDSSPSPVDIQQHSWQVSTDIENTERDMREMKNLLSKLRETMPLPLKNQDDSSLLNLTPYPLVRRRKRRFFGLCCLVSS.

The segment at 1-45 (MSSAPNGRKKRPSRSTRSSIFQISKPPLQTGDWERRGSGSESAHK) is disordered. The segment covering 32–45 (DWERRGSGSESAHK) has biased composition (basic and acidic residues). The short motif at 242–247 (RRRKRR) is the Nuclear localization signal element. 2 S-palmitoyl cysteine lipidation sites follow: cysteine 252 and cysteine 253.

This sequence belongs to the RGS7BP/RGS9BP family. In terms of assembly, interacts with 'R7' family proteins RGS6, RGS7, RGS9 and RGS11. Component of some R7-Gbeta5 complex composed of some R7 protein (RGS6, RGS7, RGS9 or RGS11), Gbeta5 (GNB5) and RGS7BP. Palmitoylated. Undergoes rapid palmitoylation turnover. De novo and turnover palmitoylation are both mediated by ZDHHC2. Palmitoylation regulates the cell membrane and nuclear shuttling and the regulation of GPCR signaling. Upon depalmitoylation, it is targeted from the plasma membrane into the nucleus. GPCR signaling inhibits depalmitoylation and promotes localization to the plasma membrane.

The protein resides in the nucleus. The protein localises to the cytoplasm. It localises to the cell membrane. Functionally, regulator of G protein-coupled receptor (GPCR) signaling. Regulatory subunit of the R7-Gbeta5 complexes that acts by controlling the subcellular location of the R7-Gbeta5 complexes. When palmitoylated, it targets the R7-Gbeta5 complexes to the plasma membrane, leading to inhibit G protein alpha subunits. When it is unpalmitoylated, the R7-Gbeta5 complexes undergo a nuclear/cytoplasmic shuttling. May also act by controlling the proteolytic stability of R7 proteins, probably by protecting them from degradation. This chain is Regulator of G-protein signaling 7-binding protein (RGS7BP), found in Bos taurus (Bovine).